The chain runs to 480 residues: UDP-glucose 6-dehydrogenase 3 (480 aa).

Residues 8 to 13, Asp33, Arg38, 86 to 90, 127 to 128, and Glu161 contribute to the NAD(+) site; these read GAGYVG, VNTPT, and ST. Substrate-binding positions include 157–161, 216–223, and 256–269; these read EFLAE, KLAANAFL, and RIGP…VGFG. Cys272 acts as the Nucleophile in catalysis. Residue 272–275 coordinates NAD(+); it reads CFQK. Residue 334–335 participates in substrate binding; that stretch reads FK. Arg342 contributes to the NAD(+) binding site. Ser393 carries the post-translational modification Phosphoserine. Position 447 (Arg447) interacts with substrate.

Belongs to the UDP-glucose/GDP-mannose dehydrogenase family.

It catalyses the reaction UDP-alpha-D-glucose + 2 NAD(+) + H2O = UDP-alpha-D-glucuronate + 2 NADH + 3 H(+). It participates in nucleotide-sugar biosynthesis; UDP-alpha-D-glucuronate biosynthesis; UDP-alpha-D-glucuronate from UDP-alpha-D-glucose: step 1/1. Its function is as follows. Involved in the biosynthesis of UDP-glucuronic acid (UDP-GlcA), providing nucleotide sugars for cell-wall polymers. In Oryza sativa subsp. japonica (Rice), this protein is UDP-glucose 6-dehydrogenase 3 (UGD3).